The primary structure comprises 273 residues: GDNF family receptor alpha-4 (273 aa).

Asn-192 is a glycosylation site (N-linked (GlcNAc...) asparagine). A lipid anchor (GPI-anchor amidated asparagine) is attached at Asn-250. Positions 251–273 are cleaved as a propeptide — removed in mature form; that stretch reads AGCCFLWVSSMSILTALALQALL.

It belongs to the GDNFR family. As to quaternary structure, interacts with ARTN ligand and RET: forms a 2:2:2 ternary complex composed of ARTN ligand, GFRA3 and RET receptor. Interacts with SORL1. As to expression, weakly expressed in heart, brain and testis.

Its subcellular location is the cell membrane. The protein resides in the secreted. In terms of biological role, receptor for persephin (PSPN), a growth factor that exhibits neurotrophic activity on mesencephalic dopaminergic and motor neurons. Acts by binding to its coreceptor, GFRA4, leading to autophosphorylation and activation of the RET receptor. May be important in C-cell development and, in the postnatal development of the adrenal medulla. The chain is GDNF family receptor alpha-4 (Gfra4) from Rattus norvegicus (Rat).